The chain runs to 557 residues: Urocanate hydratase (557 aa).

Residues 1-20 (MSNPRHNEREVRSPRGDELN) form a disordered region. Residues 52 to 53 (GG), Gln-130, 176 to 178 (GMG), Glu-196, Arg-201, 242 to 243 (NA), 263 to 267 (QTSAH), 273 to 274 (YL), and Tyr-322 each bind NAD(+). Cys-410 is an active-site residue. Gly-492 contributes to the NAD(+) binding site.

The protein belongs to the urocanase family. NAD(+) serves as cofactor.

Its subcellular location is the cytoplasm. It catalyses the reaction 4-imidazolone-5-propanoate = trans-urocanate + H2O. It participates in amino-acid degradation; L-histidine degradation into L-glutamate; N-formimidoyl-L-glutamate from L-histidine: step 2/3. In terms of biological role, catalyzes the conversion of urocanate to 4-imidazolone-5-propionate. The polypeptide is Urocanate hydratase (Brucella canis (strain ATCC 23365 / NCTC 10854 / RM-666)).